Reading from the N-terminus, the 389-residue chain is DNA replication and repair protein RecF (389 aa).

30–37 (GPNGFGKT) contributes to the ATP binding site.

This sequence belongs to the RecF family.

The protein localises to the cytoplasm. Its function is as follows. The RecF protein is involved in DNA metabolism; it is required for DNA replication and normal SOS inducibility. RecF binds preferentially to single-stranded, linear DNA. It also seems to bind ATP. The protein is DNA replication and repair protein RecF of Mycolicibacterium gilvum (strain PYR-GCK) (Mycobacterium gilvum (strain PYR-GCK)).